Reading from the N-terminus, the 665-residue chain is Phosphatidylinositol-3-phosphate phosphatase MTMR1 (665 aa).

Residue Met-1 is modified to N-acetylmethionine. The span at 1–11 (MDRPAAAAAAG) shows a compositional bias: low complexity. The interval 1 to 51 (MDRPAAAAAAGCEGGGGPNPGPAGGRRPPRAAGGATAGSRQPSVETLDSPT) is disordered. Gly residues predominate over residues 12–24 (CEGGGGPNPGPAG). The span at 39-51 (SRQPSVETLDSPT) shows a compositional bias: polar residues. Phosphoserine is present on residues Ser-43 and Ser-49. The GRAM domain occupies 90-161 (NKLAQMEEAP…GVISRVEKIG (72 aa)). Residues 226–601 (GWKVYDPVSE…SHLELWVNYY (376 aa)) form the Myotubularin phosphatase domain. A 1,2-diacyl-sn-glycero-3-phospho-(1D-myo-inositol-3-phosphate) contacts are provided by Asn-351, Asn-376, and Ile-377. The active-site Phosphocysteine intermediate is Cys-438. A 1,2-diacyl-sn-glycero-3-phospho-(1D-myo-inositol-3-phosphate)-binding residues include Ser-439, Asp-440, Gly-441, Trp-442, Asp-443, Arg-444, and Arg-484. Ser-439 is a phosphate binding site. Gly-441, Trp-442, Asp-443, and Arg-444 together coordinate phosphate. The segment at 608–665 (MRPQMPIHQNLKELLAVRAELQKRVEGLQREVATRAVSSSSERGSSPSHSATSVHTSV) is required for dimerization. Residues 642 to 665 (RAVSSSSERGSSPSHSATSVHTSV) form a disordered region. Positions 645–657 (SSSSERGSSPSHS) are enriched in low complexity.

It belongs to the protein-tyrosine phosphatase family. Non-receptor class myotubularin subfamily. As to quaternary structure, homodimer.

Its subcellular location is the cell membrane. The protein localises to the cytoplasm. It catalyses the reaction a 1,2-diacyl-sn-glycero-3-phospho-(1D-myo-inositol-3-phosphate) + H2O = a 1,2-diacyl-sn-glycero-3-phospho-(1D-myo-inositol) + phosphate. The catalysed reaction is 1,2-dioctanoyl-sn-glycero-3-phospho-(1-D-myo-inositol-3-phosphate) + H2O = 1,2-dioctanoyl-sn-glycero-3-phospho-(1D-myo-inositol) + phosphate. The enzyme catalyses a 1,2-diacyl-sn-glycero-3-phospho-(1D-myo-inositol-3,5-bisphosphate) + H2O = a 1,2-diacyl-sn-glycero-3-phospho-(1D-myo-inositol-5-phosphate) + phosphate. Its function is as follows. Lipid phosphatase that specifically dephosphorylates the D-3 position of phosphatidylinositol 3-phosphate, generating phosphatidylinositol. Could also dephosphorylate phosphatidylinositol 3,5-bisphosphate to produce phosphatidylinositol 5-phosphate. The protein is Phosphatidylinositol-3-phosphate phosphatase MTMR1 of Homo sapiens (Human).